The chain runs to 475 residues: F-box protein At3g59150 (475 aa).

Residues 12–58 enclose the F-box domain; it reads GDVISNLPNDLLCRILSYLSTKEAALTSILSKRWSNLLLSIPILDFD.

The chain is F-box protein At3g59150 from Arabidopsis thaliana (Mouse-ear cress).